The sequence spans 417 residues: Serine--tRNA ligase (417 aa).

Residue 224–226 participates in L-serine binding; that stretch reads TSE. ATP contacts are provided by residues 255–257 and Val271; that span reads RRE. An L-serine-binding site is contributed by Glu278. 342-345 is an ATP binding site; sequence ELTS. Thr377 contributes to the L-serine binding site.

The protein belongs to the class-II aminoacyl-tRNA synthetase family. Type-1 seryl-tRNA synthetase subfamily. As to quaternary structure, homodimer. The tRNA molecule binds across the dimer.

The protein resides in the cytoplasm. It catalyses the reaction tRNA(Ser) + L-serine + ATP = L-seryl-tRNA(Ser) + AMP + diphosphate + H(+). The enzyme catalyses tRNA(Sec) + L-serine + ATP = L-seryl-tRNA(Sec) + AMP + diphosphate + H(+). The protein operates within aminoacyl-tRNA biosynthesis; selenocysteinyl-tRNA(Sec) biosynthesis; L-seryl-tRNA(Sec) from L-serine and tRNA(Sec): step 1/1. Its function is as follows. Catalyzes the attachment of serine to tRNA(Ser). Is also able to aminoacylate tRNA(Sec) with serine, to form the misacylated tRNA L-seryl-tRNA(Sec), which will be further converted into selenocysteinyl-tRNA(Sec). The sequence is that of Serine--tRNA ligase from Mycobacterium leprae (strain TN).